Reading from the N-terminus, the 213-residue chain is Orotate phosphoribosyltransferase (213 aa).

K26 serves as a coordination point for 5-phospho-alpha-D-ribose 1-diphosphate. Residue 34 to 35 (FF) coordinates orotate. 5-phospho-alpha-D-ribose 1-diphosphate contacts are provided by residues 72–73 (YK), R99, K100, K103, H105, and 124–132 (DDVITAGTA). Orotate contacts are provided by T128 and R156.

This sequence belongs to the purine/pyrimidine phosphoribosyltransferase family. PyrE subfamily. In terms of assembly, homodimer. Mg(2+) is required as a cofactor.

The enzyme catalyses orotidine 5'-phosphate + diphosphate = orotate + 5-phospho-alpha-D-ribose 1-diphosphate. Its pathway is pyrimidine metabolism; UMP biosynthesis via de novo pathway; UMP from orotate: step 1/2. Its function is as follows. Catalyzes the transfer of a ribosyl phosphate group from 5-phosphoribose 1-diphosphate to orotate, leading to the formation of orotidine monophosphate (OMP). The chain is Orotate phosphoribosyltransferase from Salmonella paratyphi A (strain ATCC 9150 / SARB42).